Reading from the N-terminus, the 152-residue chain is Venom protein family 1 protein 2 (152 aa).

The N-terminal stretch at 1 to 21 (MAKLVFISFLVASFCLIGCFG) is a signal peptide. Cys-70 and Cys-150 form a disulfide bridge.

This sequence belongs to the insect vpf1 family. As to expression, expressed by the venom gland (posterior main gland) (at protein level).

It localises to the secreted. This is Venom protein family 1 protein 2 from Platymeris rhadamanthus (Red spot assassin bug).